The sequence spans 575 residues: Stage VI sporulation protein D (575 aa).

The disordered stretch occupies residues 159–502 (EELSEPPAHS…ETKEPQTKES (344 aa)). The segment covering 200 to 212 (GLREELETEKAES) has biased composition (basic and acidic residues). Composition is skewed to acidic residues over residues 229–238 (KEEEESEELA) and 249–264 (ETEE…EIEI). 3 stretches are compositionally biased toward basic and acidic residues: residues 266–275 (EIVKAKKETA), 283–302 (DVRE…HVGA), and 310–325 (AELH…KEET). The span at 438-448 (EEEEQEEESFE) shows a compositional bias: acidic residues. Residues 449–464 (IEVRKTPSAEEPKEET) are compositionally biased toward basic and acidic residues. Over residues 465–474 (PFQSFQLPES) the composition is skewed to polar residues. The span at 493–502 (ETKEPQTKES) shows a compositional bias: basic and acidic residues. In terms of domain architecture, LysM spans 523-567 (KICIVQQEDTIERLCERYEITSQQLIRMNSLALDDELKAGQILYI).

Its function is as follows. Required for assembly of a normal spore coat. May be a component of the innermost layer of the spore coat that aids in its adherence to the prespore. The sequence is that of Stage VI sporulation protein D (spoVID) from Bacillus subtilis (strain 168).